We begin with the raw amino-acid sequence, 166 residues long: Regulatory protein RecX (166 aa).

This sequence belongs to the RecX family.

Its subcellular location is the cytoplasm. Modulates RecA activity. This is Regulatory protein RecX from Shigella sonnei (strain Ss046).